The following is a 120-amino-acid chain: Large ribosomal subunit protein uL14 (120 aa).

Belongs to the universal ribosomal protein uL14 family. As to quaternary structure, part of the 50S ribosomal subunit. Forms a cluster with proteins L3 and L19. In the 70S ribosome, L14 and L19 interact and together make contacts with the 16S rRNA in bridges B5 and B8.

Functionally, binds to 23S rRNA. Forms part of two intersubunit bridges in the 70S ribosome. This is Large ribosomal subunit protein uL14 from Dictyoglomus turgidum (strain DSM 6724 / Z-1310).